The sequence spans 952 residues: Bifunctional ent-kaurene synthase (952 aa).

Positions Asp-328 to Asp-331 match the DXDD B-type cyclization motif motif. Mg(2+) contacts are provided by Asp-668, Glu-672, Asn-848, Asp-849, Ser-852, and Asp-856. Residues Asp-668–Glu-672 carry the DEXXE A-type cyclization motif motif.

This sequence belongs to the terpene synthase family. Mg(2+) is required as a cofactor.

The enzyme catalyses ent-copalyl diphosphate = ent-kaur-16-ene + diphosphate. It carries out the reaction (2E,6E,10E)-geranylgeranyl diphosphate = ent-copalyl diphosphate. Its pathway is plant hormone biosynthesis; gibberellin biosynthesis. Functionally, bifunctional ent-kaurene synthase; part of the gene cluster that mediates the biosynthesis of gibberellins (GAs), diterpenoids that may provide a selective advantage during infection of the preferred host plant, rice. Gibberellins (GAs) are diterpenoids and are synthesized via the mevalonate pathway. Biosynthesis of the major metabolite GA3 (gibberellic acid) from geranylgeranyl diphosphate (GGPP) requires 13 steps. The GGPP produced by the geranylgeranyl diphosphate synthase GGS2 is converted to ent-kaurene via ent-copalyldiphosphate in a two-step cyclization reaction performed by the bifunctional ent-copalyl diphosphate synthase/ent-kaurene synthase enzyme (CPS/KS). Ent-Kaurene is metabolized to GAs by a series of oxidation reactions catalyzed by cytochrome P450 monooxygenases. Cytochrome P450 monooxygenase P450-4 is an ent-kaurene oxidase that catalyzes the three oxidation steps between ent-kaurene and ent-kaurenoic acid. The highly multifunctional cytochrome P450 monooxygenase P450-1 then catalyzes four steps involving oxidation at two carbon atoms, in the main pathway from ent-kaurenoic acid to GA14 via GA12-aldehyde as well as producing kaurenolides and fujenoic acids as by-products. The cytochrome P450 monooxygenase P450-2 then converts GA14 to GA4 by removal of C-20. GA4 is further converted to GA7 by the GA4 desaturase DES via 1,2-desaturation before cytochrome P450 monooxygenase P450-3, a 13-hydroxylase, hydroxylates GA7 to GA3, the final product of the GA-biosynthetic pathway. This Gibberella fujikuroi (strain CBS 195.34 / IMI 58289 / NRRL A-6831) (Bakanae and foot rot disease fungus) protein is Bifunctional ent-kaurene synthase.